Consider the following 564-residue polypeptide: Asparagine synthetase domain-containing protein CG17486 (564 aa).

The Nucleophile role is filled by Cys2. A Glutamine amidotransferase type-2 domain is found at 2-180; the sequence is CGIFCSVVNN…PLGLFRVKLN (179 aa). The 262-residue stretch at 280–541 folds into the Asparagine synthetase domain; sequence PFCRLCMQKL…GLRDVVFLKK (262 aa).

The chain is Asparagine synthetase domain-containing protein CG17486 from Drosophila melanogaster (Fruit fly).